A 285-amino-acid chain; its full sequence is Bifunctional protein FolD (285 aa).

NADP(+) contacts are provided by residues 164–166, Ile189, and Ile230; that span reads GAS.

The protein belongs to the tetrahydrofolate dehydrogenase/cyclohydrolase family. Homodimer.

The catalysed reaction is (6R)-5,10-methylene-5,6,7,8-tetrahydrofolate + NADP(+) = (6R)-5,10-methenyltetrahydrofolate + NADPH. It carries out the reaction (6R)-5,10-methenyltetrahydrofolate + H2O = (6R)-10-formyltetrahydrofolate + H(+). The protein operates within one-carbon metabolism; tetrahydrofolate interconversion. In terms of biological role, catalyzes the oxidation of 5,10-methylenetetrahydrofolate to 5,10-methenyltetrahydrofolate and then the hydrolysis of 5,10-methenyltetrahydrofolate to 10-formyltetrahydrofolate. This is Bifunctional protein FolD from Sulfurimonas denitrificans (strain ATCC 33889 / DSM 1251) (Thiomicrospira denitrificans (strain ATCC 33889 / DSM 1251)).